Consider the following 171-residue polypeptide: Secreted LysM effector Blys4 (171 aa).

Residues Lys125–Leu169 form the LysM domain.

It belongs to the secreted LysM effector family.

Its function is as follows. Might have a role in sequestration of chitin oligosaccharides (breakdown products of fungal cell walls that are released during invasion and act as triggers of host immunity) to dampen host defense. This Beauveria bassiana (strain ARSEF 2860) (White muscardine disease fungus) protein is Secreted LysM effector Blys4.